A 435-amino-acid polypeptide reads, in one-letter code: Diguanylate cyclase TpbB (435 aa).

The Cytoplasmic segment spans residues 1–22 (MNRRRRYTGSNPSLRRVLYRAH). Residues 23-43 (LGVALVAVFTAGLAVTLVGLL) form a helical membrane-spanning segment. Residues 44–154 (TLRAYADPNQ…VKGSGGSLLR (111 aa)) lie on the Periplasmic side of the membrane. A helical membrane pass occupies residues 155-175 (FLLTGFAGMVLCLLLTALGAF). The Cytoplasmic segment spans residues 176–435 (YLSRRLVRGI…DSATPEAPPK (260 aa)). The HAMP domain maps to 183-236 (RGIVGPLDQLAKVAHTVRRERDFEKRVPEAGIAELSQLGEDFNALLDELESWQA). One can recognise a GGDEF domain in the interval 279–415 (EQLAVLFIDS…GSRRLAELND (137 aa)). Mg(2+) is bound by residues S288 and D330. D330 functions as the Proton acceptor in the catalytic mechanism. Positions 414–426 (NDPRILQEEKEID) are enriched in basic and acidic residues. Residues 414–435 (NDPRILQEEKEIDSATPEAPPK) form a disordered region.

The cofactor is Mg(2+). Phosphorylated at both Tyr residues and Ser/Thr residues. Dephosphorylated and inactivated by TpbA.

The protein resides in the cell inner membrane. The catalysed reaction is 2 GTP = 3',3'-c-di-GMP + 2 diphosphate. Its pathway is purine metabolism; 3',5'-cyclic di-GMP biosynthesis. Activity is tightly controlled by YfiR, a small periplasmic protein, and the OmpA/Pal-like outer-membrane lipoprotein YfiB. Diguanylate cyclase activity is inhibited by the specific interaction of YfiR with the TpbB periplasmic domain and is activated by YfiB, which releases the YfiR-mediated repression through sequestration of YfiR to the outer membrane. Activity is also controlled by dephosphorylation of the periplasmic domain by the tyrosine phosphatase TpbA. In terms of biological role, catalyzes the synthesis of cyclic-di-GMP (c-di-GMP) via the condensation of 2 GTP molecules. Important for the regulation of biofilm maintenance when exposed to peroxide. Functionally, part of the YfiB-TpbB-YfiR (or yfiBNR) system, encoding a tripartite signaling module that modulates intracellular c-di-GMP levels. The system is a key regulator of the small colony variant (SCV) phenotype, and plays an important role in biofilm formation and in vivo persistence. The c-di-GMP produced by TpbB/YfiN stimulates the production of the Pel and Psl exopolysaccharides, which promotes surface attachment, generates an SCV phenotype and confers resistance against phagocytosis. The polypeptide is Diguanylate cyclase TpbB (Pseudomonas aeruginosa (strain UCBPP-PA14)).